The following is a 328-amino-acid chain: Formimidoylglutamase (328 aa).

6 residues coordinate Mn(2+): His133, Asp159, His161, Asp163, Asp253, and Asp255.

It belongs to the arginase family. It depends on Mn(2+) as a cofactor.

The catalysed reaction is N-formimidoyl-L-glutamate + H2O = formamide + L-glutamate. It functions in the pathway amino-acid degradation; L-histidine degradation into L-glutamate; L-glutamate from N-formimidoyl-L-glutamate (hydrolase route): step 1/1. In terms of biological role, catalyzes the conversion of N-formimidoyl-L-glutamate to L-glutamate and formamide. This Streptococcus pyogenes serotype M5 (strain Manfredo) protein is Formimidoylglutamase.